The chain runs to 360 residues: Magnesium-protoporphyrin IX monomethyl ester [oxidative] cyclase (360 aa).

The interval 1–21 (MPPTAVTEATAVPGSNVTTKD) is disordered.

This sequence belongs to the AcsF family. Requires Fe cation as cofactor.

It carries out the reaction Mg-protoporphyrin IX 13-monomethyl ester + 3 NADPH + 3 O2 + 2 H(+) = 3,8-divinyl protochlorophyllide a + 3 NADP(+) + 5 H2O. It participates in porphyrin-containing compound metabolism; chlorophyll biosynthesis (light-independent). Its function is as follows. Catalyzes the formation of the isocyclic ring in chlorophyll biosynthesis. Mediates the cyclase reaction, which results in the formation of divinylprotochlorophyllide (Pchlide) characteristic of all chlorophylls from magnesium-protoporphyrin IX 13-monomethyl ester (MgPMME). This chain is Magnesium-protoporphyrin IX monomethyl ester [oxidative] cyclase, found in Synechococcus sp. (strain CC9311).